A 471-amino-acid polypeptide reads, in one-letter code: POU domain protein 2 (471 aa).

The span at 1–18 (CGKSYEEEEEEEDDELEA) shows a compositional bias: acidic residues. Disordered regions lie at residues 1 to 32 (CGKSYEEEEEEEDDELEADVAQNLSSKRSARQ) and 149 to 238 (DQQL…PKPL). Over residues 165-180 (STPLSKSPLRSPSLSP) the composition is skewed to low complexity. The span at 186-196 (EPQQAQRTPPN) shows a compositional bias: polar residues. Positions 197–230 (SLAAAGLGLSSAVLTPNTPSMQQQQQQTMTSTTN) are enriched in low complexity. The region spanning 257 to 331 (EETTDLEELE…LLQKWLEDAD (75 aa)) is the POU-specific domain. Residues 362–421 (RRKKRTSIETTIRGALEQAFVLNCKPTSEEINQLSERLHMDKEVVRVWFCNRRQKEKRIN) constitute a DNA-binding region (homeobox).

The protein belongs to the POU transcription factor family. Class-2 subfamily.

It is found in the nucleus. In terms of biological role, DNA-binding regulatory protein implicated in early development. Involved in neuronal cell fate decision. May act as an octamer-dependent activator of transcription. The protein is POU domain protein 2 (pdm2) of Drosophila virilis (Fruit fly).